The sequence spans 153 residues: Ribosome maturation factor RimP (153 aa).

This sequence belongs to the RimP family.

It localises to the cytoplasm. Required for maturation of 30S ribosomal subunits. The protein is Ribosome maturation factor RimP of Nostoc sp. (strain PCC 7120 / SAG 25.82 / UTEX 2576).